The following is a 246-amino-acid chain: 5'-nucleotidase SurE (246 aa).

The a divalent metal cation site is built by Asp8, Asp9, Ser39, and Asn91.

Belongs to the SurE nucleotidase family. A divalent metal cation serves as cofactor.

It is found in the cytoplasm. The enzyme catalyses a ribonucleoside 5'-phosphate + H2O = a ribonucleoside + phosphate. In terms of biological role, nucleotidase that shows phosphatase activity on nucleoside 5'-monophosphates. The chain is 5'-nucleotidase SurE from Histophilus somni (strain 129Pt) (Haemophilus somnus).